A 215-amino-acid polypeptide reads, in one-letter code: Guanylate kinase (215 aa).

The region spanning glycine 11–serine 189 is the Guanylate kinase-like domain. Alanine 18–serine 25 contributes to the ATP binding site.

The protein belongs to the guanylate kinase family.

It localises to the cytoplasm. The catalysed reaction is GMP + ATP = GDP + ADP. Essential for recycling GMP and indirectly, cGMP. The protein is Guanylate kinase of Bordetella bronchiseptica (strain ATCC BAA-588 / NCTC 13252 / RB50) (Alcaligenes bronchisepticus).